Consider the following 136-residue polypeptide: Basic phospholipase A2 Tgc-K49 (136 aa).

An N-terminal signal peptide occupies residues 1-15 (MRTLWIVAVLLVGEG). Disulfide bonds link cysteine 41/cysteine 130, cysteine 43/cysteine 59, cysteine 58/cysteine 110, cysteine 64/cysteine 136, cysteine 65/cysteine 103, cysteine 72/cysteine 96, and cysteine 90/cysteine 101. Residue histidine 62 is part of the active site. Aspartate 104 is a catalytic residue.

This sequence belongs to the phospholipase A2 family. Group II subfamily. K49 sub-subfamily. Expressed by the venom gland.

It localises to the secreted. It catalyses the reaction a 1,2-diacyl-sn-glycero-3-phosphocholine + H2O = a 1-acyl-sn-glycero-3-phosphocholine + a fatty acid + H(+). In terms of biological role, PLA2 catalyzes the calcium-dependent hydrolysis of the 2-acyl groups in 3-sn-phosphoglycerides. In Trimeresurus gracilis (Kikuchi habu), this protein is Basic phospholipase A2 Tgc-K49.